The sequence spans 64 residues: Prokaryotic ubiquitin-like protein Pup (64 aa).

Positions 1–37 (MAQEQTKRGGGGGDDDDIAGSTAAGQERREKLTEETD) are disordered. Residues 21 to 58 (STAAGQERREKLTEETDDLLDEIDDVLEENAEDFVRAY) are ARC ATPase binding. Residues 23–52 (AAGQERREKLTEETDDLLDEIDDVLEENAE) are a coiled coil. Gln-64 bears the Deamidated glutamine mark. An Isoglutamyl lysine isopeptide (Gln-Lys) (interchain with K-? in acceptor proteins) cross-link involves residue Gln-64.

This sequence belongs to the prokaryotic ubiquitin-like protein family. As to quaternary structure, strongly interacts with the proteasome-associated ATPase ARC through a hydrophobic interface; the interacting region of Pup lies in its C-terminal half. There is one Pup binding site per ARC hexamer ring. Is modified by deamidation of its C-terminal glutamine to glutamate by the deamidase Dop, a prerequisite to the subsequent pupylation process.

It functions in the pathway protein degradation; proteasomal Pup-dependent pathway. Its function is as follows. Protein modifier that is covalently attached to lysine residues of substrate proteins, thereby targeting them for proteasomal degradation. The tagging system is termed pupylation. The chain is Prokaryotic ubiquitin-like protein Pup from Mycobacterium tuberculosis (strain ATCC 25177 / H37Ra).